A 449-amino-acid polypeptide reads, in one-letter code: N-succinylarginine dihydrolase (449 aa).

Substrate is bound by residues 19–28 (GGLSYGNVAS), N110, and 137–138 (HR). The interval 23-43 (YGNVASQSNSQQGSNPREAAR) is disordered. Polar residues predominate over residues 25 to 37 (NVASQSNSQQGSN). Residue E174 is part of the active site. R214 provides a ligand contact to substrate. Residue H250 is part of the active site. Substrate is bound by residues D252 and N365. The Nucleophile role is filled by C371.

It belongs to the succinylarginine dihydrolase family. In terms of assembly, homodimer.

It carries out the reaction N(2)-succinyl-L-arginine + 2 H2O + 2 H(+) = N(2)-succinyl-L-ornithine + 2 NH4(+) + CO2. Its pathway is amino-acid degradation; L-arginine degradation via AST pathway; L-glutamate and succinate from L-arginine: step 2/5. Catalyzes the hydrolysis of N(2)-succinylarginine into N(2)-succinylornithine, ammonia and CO(2). The chain is N-succinylarginine dihydrolase from Pseudomonas putida (strain GB-1).